Here is a 102-residue protein sequence, read N- to C-terminus: Small ribosomal subunit protein uS10 (102 aa).

Belongs to the universal ribosomal protein uS10 family. In terms of assembly, part of the 30S ribosomal subunit.

Involved in the binding of tRNA to the ribosomes. The sequence is that of Small ribosomal subunit protein uS10 from Syntrophotalea carbinolica (strain DSM 2380 / NBRC 103641 / GraBd1) (Pelobacter carbinolicus).